The sequence spans 165 residues: Regulator of ribonuclease activity A (165 aa).

It belongs to the RraA family. As to quaternary structure, homotrimer. Binds to both RNA-binding sites in the C-terminal region of Rne and to RhlB.

The protein resides in the cytoplasm. Its function is as follows. Globally modulates RNA abundance by binding to RNase E (Rne) and regulating its endonucleolytic activity. Can modulate Rne action in a substrate-dependent manner by altering the composition of the degradosome. Modulates RNA-binding and helicase activities of the degradosome. The polypeptide is Regulator of ribonuclease activity A (Actinobacillus pleuropneumoniae serotype 7 (strain AP76)).